We begin with the raw amino-acid sequence, 238 residues long: 2-C-methyl-D-erythritol 4-phosphate cytidylyltransferase (238 aa).

Belongs to the IspD/TarI cytidylyltransferase family. IspD subfamily.

It catalyses the reaction 2-C-methyl-D-erythritol 4-phosphate + CTP + H(+) = 4-CDP-2-C-methyl-D-erythritol + diphosphate. The protein operates within isoprenoid biosynthesis; isopentenyl diphosphate biosynthesis via DXP pathway; isopentenyl diphosphate from 1-deoxy-D-xylulose 5-phosphate: step 2/6. Functionally, catalyzes the formation of 4-diphosphocytidyl-2-C-methyl-D-erythritol from CTP and 2-C-methyl-D-erythritol 4-phosphate (MEP). This is 2-C-methyl-D-erythritol 4-phosphate cytidylyltransferase from Leptospira interrogans serogroup Icterohaemorrhagiae serovar copenhageni (strain Fiocruz L1-130).